The chain runs to 199 residues: Probable GTP-binding protein EngB (199 aa).

Residues 28-199 enclose the EngB-type G domain; that stretch reads DLPEIALAGR…DSWDAILEQV (172 aa). GTP-binding positions include 36-43, 63-67, 81-84, 148-151, and 180-182; these read GRSNVGKS, GKTQL, DVPG, TKAD, and FSS. 2 residues coordinate Mg(2+): Ser-43 and Thr-65.

It belongs to the TRAFAC class TrmE-Era-EngA-EngB-Septin-like GTPase superfamily. EngB GTPase family. Mg(2+) is required as a cofactor.

Necessary for normal cell division and for the maintenance of normal septation. In Streptococcus pyogenes serotype M18 (strain MGAS8232), this protein is Probable GTP-binding protein EngB.